Consider the following 504-residue polypeptide: MSFSVDVLANIAIELQRGIGHQDRFQRLITTLRQVLECDASALLRYDSRQFIPLAIDGLAKDVLGRRFALEGHPRLEAIARAGDVVRFPADSELPDPYDGLIPGQESLKVHACVGLPLFAGQNLIGALTLDGMQPDQFDVFSDEELRLIAALAAGALSNALLIEQLESQNMLPGDAAPFEAVKQTQMIGLSPGMTQLKKEIEIVAASDLNVLISGETGTGKELVAKAIHEASPRAVNPLVYLNCAALPESVAESELFGHVKGAFTGAISNRSGKFEMADNGTLFLDEIGELSLALQAKLLRVLQYGDIQRVGDDRSLRVDVRVLAATNRDLREEVLAGRFRADLFHRLSVFPLSVPPLRERGDDVILLAGYFCEQCRLRLGLSRVVLSAGARNLLQHYRFPGNVRELEHAIHRAVVLARATRSGDEVILEAQHFAFPEVTLPPPEAAAVPVVKQNLREATEAFQRETIRQALAQNHHNWAACARMLETDVANLHRLAKRLGLKD.

Asp57 bears the 4-aspartylphosphate mark. The Sigma-54 factor interaction domain occupies 187-416 (MIGLSPGMTQ…LEHAIHRAVV (230 aa)). ATP contacts are provided by residues 215–222 (GETGTGKE) and 278–287 (ADNGTLFLDE). A DNA-binding region (H-T-H motif) is located at residues 479–498 (WAACARMLETDVANLHRLAK).

The protein operates within nitrogen metabolism; nitric oxide reduction. Its function is as follows. Required for the expression of anaerobic nitric oxide (NO) reductase, acts as a transcriptional activator for at least the norVW operon. Activation also requires sigma-54. The sequence is that of Anaerobic nitric oxide reductase transcription regulator NorR from Escherichia coli O8 (strain IAI1).